Here is a 320-residue protein sequence, read N- to C-terminus: MEDLISQLPNELLQEILLNLPTSESVRTSVLPTRWRNLWQSVPGLYLISRQILKFVNLRTPSDVVLEMLISCSPVLQVLSICDVGVDFLKVRSQTLRSLSLWTFIFKGENDDVSLGDDGESGLVIDTPSLEFLRIRDFPLEDFRVESVISSIKMCIDGTYAYTKLQQLPEFKNLTRLYAFLHTDYSEMLPIYLSSSPNLKSIDLELHGYPKMEEIASSPVPKCLQTSIENVKIKMTPKADQEKSRKAETEVANYILENATLLKLTLWLDDEEEDESSSVLEKILTFQNYSFVEVKIGREASKFRLGYTFDEAKHFSRRFL.

Residues 2-48 (EDLISQLPNELLQEILLNLPTSESVRTSVLPTRWRNLWQSVPGLYLI) enclose the F-box domain. The FBD domain maps to 212–268 (MEEIASSPVPKCLQTSIENVKIKMTPKADQEKSRKAETEVANYILENATLLKLTLWL).

The sequence is that of Putative FBD-associated F-box protein At3g60710 from Arabidopsis thaliana (Mouse-ear cress).